Consider the following 185-residue polypeptide: Ribosome-recycling factor (185 aa).

The protein belongs to the RRF family.

It localises to the cytoplasm. Functionally, responsible for the release of ribosomes from messenger RNA at the termination of protein biosynthesis. May increase the efficiency of translation by recycling ribosomes from one round of translation to another. This is Ribosome-recycling factor from Helicobacter pylori (strain Shi470).